Here is a 455-residue protein sequence, read N- to C-terminus: MYKHPWLPNLDLTDEMLKEIGVNSLDDLFNDIPAEIKINRLLKVAKDKPLSEYEIEKEIYEKVKKNVELEAPPFIGAGICPHYIPNAVKFIIGRSEFYTSYTPYQPEISQGILQALFEYQSLMAELLEMDVVNASMYDWGSALAEAVLMANRINGKKTVLVPENANPFHKEVMRTWIQGKGIKIEEVKYDKNSGEVDIEDLEKKSSSNDVSAIYVQQPNFFGIFESNIEHIIDVAKHKKALSIIGVNPLSLGLIKPPGSYEADIVVGDGQELGLPLNFGGPLMGIFAVRWDMGLVRQMPGRIVGITRDVNNNMGFTLILQTREQFIKREKATSNITTNEALLALANAVYLSLLGKEGIRELAEEIYFRSHYAAKRLTEIDNVIMPFTSDFFEEFVIKFPIEYNIINDKLKERKLQGGLKLSIHTSLFCVTEVHDKKSIDLLVSTIQEAIKSVETS.

It belongs to the GcvP family. N-terminal subunit subfamily. As to quaternary structure, the glycine cleavage system is composed of four proteins: P, T, L and H. In this organism, the P 'protein' is a heterodimer of two subunits.

It catalyses the reaction N(6)-[(R)-lipoyl]-L-lysyl-[glycine-cleavage complex H protein] + glycine + H(+) = N(6)-[(R)-S(8)-aminomethyldihydrolipoyl]-L-lysyl-[glycine-cleavage complex H protein] + CO2. Functionally, the glycine cleavage system catalyzes the degradation of glycine. The P protein binds the alpha-amino group of glycine through its pyridoxal phosphate cofactor; CO(2) is released and the remaining methylamine moiety is then transferred to the lipoamide cofactor of the H protein. The chain is Probable glycine dehydrogenase (decarboxylating) subunit 1 from Saccharolobus solfataricus (strain ATCC 35092 / DSM 1617 / JCM 11322 / P2) (Sulfolobus solfataricus).